The following is a 282-amino-acid chain: 4-diphosphocytidyl-2-C-methyl-D-erythritol kinase (282 aa).

Lysine 9 is an active-site residue. Residue 98-108 (PMGGGLGGGSS) participates in ATP binding. Aspartate 140 is a catalytic residue.

Belongs to the GHMP kinase family. IspE subfamily. As to quaternary structure, homodimer.

The enzyme catalyses 4-CDP-2-C-methyl-D-erythritol + ATP = 4-CDP-2-C-methyl-D-erythritol 2-phosphate + ADP + H(+). The protein operates within isoprenoid biosynthesis; isopentenyl diphosphate biosynthesis via DXP pathway; isopentenyl diphosphate from 1-deoxy-D-xylulose 5-phosphate: step 3/6. In terms of biological role, catalyzes the phosphorylation of the position 2 hydroxy group of 4-diphosphocytidyl-2C-methyl-D-erythritol. The sequence is that of 4-diphosphocytidyl-2-C-methyl-D-erythritol kinase from Salmonella paratyphi B (strain ATCC BAA-1250 / SPB7).